Here is a 261-residue protein sequence, read N- to C-terminus: Probable membrane transporter protein PD_1894 (261 aa).

8 consecutive transmembrane segments (helical) span residues 6 to 26, 45 to 64, 78 to 98, 99 to 119, 150 to 170, 175 to 195, 205 to 225, and 239 to 259; these read LIVT…LGGG, HIAI…ANLI, VIFA…GMLI, DGQR…LLML, AASG…LIFA, TINA…ITTL, WTIA…GTLL, and VFGL…WASL.

The protein belongs to the 4-toluene sulfonate uptake permease (TSUP) (TC 2.A.102) family.

It localises to the cell membrane. In Xylella fastidiosa (strain Temecula1 / ATCC 700964), this protein is Probable membrane transporter protein PD_1894.